The chain runs to 156 residues: Ribosomal RNA large subunit methyltransferase H (156 aa).

Residues Leu72, Gly104, and 123 to 128 each bind S-adenosyl-L-methionine; that span reads FGKMVW.

Belongs to the RNA methyltransferase RlmH family. In terms of assembly, homodimer.

It is found in the cytoplasm. It catalyses the reaction pseudouridine(1915) in 23S rRNA + S-adenosyl-L-methionine = N(3)-methylpseudouridine(1915) in 23S rRNA + S-adenosyl-L-homocysteine + H(+). Functionally, specifically methylates the pseudouridine at position 1915 (m3Psi1915) in 23S rRNA. In Ruegeria sp. (strain TM1040) (Silicibacter sp.), this protein is Ribosomal RNA large subunit methyltransferase H.